A 157-amino-acid polypeptide reads, in one-letter code: Endoribonuclease YbeY (157 aa).

H122, H126, and H132 together coordinate Zn(2+).

It belongs to the endoribonuclease YbeY family. The cofactor is Zn(2+).

It localises to the cytoplasm. Its function is as follows. Single strand-specific metallo-endoribonuclease involved in late-stage 70S ribosome quality control and in maturation of the 3' terminus of the 16S rRNA. This chain is Endoribonuclease YbeY, found in Bacillus velezensis (strain DSM 23117 / BGSC 10A6 / LMG 26770 / FZB42) (Bacillus amyloliquefaciens subsp. plantarum).